A 143-amino-acid polypeptide reads, in one-letter code: Brain ribonuclease (143 aa).

Residues 1–21 (KESAAAKFRRQHMDSGSSSSG) are disordered. Positions 7 and 10 each coordinate substrate. His12 serves as the catalytic Proton acceptor. 4 disulfide bridges follow: Cys26–Cys84, Cys40–Cys95, Cys58–Cys110, and Cys65–Cys72. A substrate-binding site is contributed by 41–45 (KPVNT). A glycan (N-linked (GlcNAc...) asparagine) is linked at Asn62. Residues Lys66 and Arg85 each contribute to the substrate site. The active-site Proton donor is His119. A glycan (O-linked (GalNAc...) threonine) is linked at Thr129. An O-linked (GalNAc...) serine glycan is attached at Ser133.

This sequence belongs to the pancreatic ribonuclease family.

It is found in the secreted. The protein is Brain ribonuclease (BRN) of Ovis aries (Sheep).